The following is a 244-amino-acid chain: Probable transcriptional regulatory protein Dgeo_2194 (244 aa).

Residues 1–21 are disordered; that stretch reads MAGHSKWAQIKRKKGANDKKR.

It belongs to the TACO1 family.

Its subcellular location is the cytoplasm. The chain is Probable transcriptional regulatory protein Dgeo_2194 from Deinococcus geothermalis (strain DSM 11300 / CIP 105573 / AG-3a).